Consider the following 305-residue polypeptide: Probable DNA-invertase y4cG (305 aa).

In terms of domain architecture, Resolvase/invertase-type recombinase catalytic spans 15–148; that stretch reads RLIGYARVST…SGMQAAKARG (134 aa). Serine 23 (O-(5'-phospho-DNA)-serine intermediate) is an active-site residue.

This sequence belongs to the site-specific recombinase resolvase family.

This chain is Probable DNA-invertase y4cG, found in Sinorhizobium fredii (strain NBRC 101917 / NGR234).